Reading from the N-terminus, the 1152-residue chain is Syntaxin-binding protein 5 (1152 aa).

Residues 14 to 35 (TAGSSSASQQQQQQQHPPGNRE) are disordered. A compositionally biased stretch (low complexity) spans 17 to 28 (SSSASQQQQQQQ). WD repeat units lie at residues 62–95 (SALA…CYCQ), 102–141 (VIQL…SLKF), 146–182 (VTFC…GYVI), 201–235 (HISD…DYRY), 241–273 (IHSV…PTKP), 295–337 (PILK…KSTA), 345–379 (IVDF…LIDL), 401–478 (TCCE…YKLK), 506–620 (QIIS…ELVI), and 634–696 (TSLA…SGAG). Disordered stretches follow at residues 557–596 (TPEG…GLRD) and 675–731 (SNDP…QKVN). Serine 693 is modified (phosphoserine). Residues 713 to 722 (SPTSGSSSPH) are compositionally biased toward low complexity. At serine 724 the chain carries Phosphoserine; by PKA. A Phosphoserine modification is found at serine 760. Threonine 763 is subject to Phosphothreonine. Phosphoserine is present on serine 783. A Phosphothreonine modification is found at threonine 785. Phosphoserine is present on serine 786. 4 WD repeats span residues 795 to 852 (ISAL…SGTI), 861 to 935 (RMAF…QNCA), 940 to 984 (ITET…LDVY), and 998 to 1021 (CFAN…TYSQ). Residues 879–893 (WTEHNVPEEKDEKEK) show a composition bias toward basic and acidic residues. Residues 879–907 (WTEHNVPEEKDEKEKLKKRRPVSVSPSSS) form a disordered region. Phosphoserine occurs at positions 901 and 903. Threonine 1040 is modified (phosphothreonine). Serine 1059 and serine 1132 each carry phosphoserine. A v-SNARE coiled-coil homology domain is found at 1087–1147 (GIEGVKGAAS…HEMMLKYKDK (61 aa)).

This sequence belongs to the WD repeat L(2)GL family. As to quaternary structure, part of a complex that contains STXBP5, STX4A and SNAP23. Interacts with STX1A and STX4A via its v-SNARE homology domain. Part of a complex that contains STX1, STXBP5, SNAP25 and SYT1. Post-translationally, phosphorylation by PKA reduces interaction with STX1A and enhances synaptic neurotransmitter release. As to expression, isoform 1 is detected in heart, brain, lung, liver, skeletal muscle, kidney and testis. Isoform 2 is detected in brain and in testis. Isoform 3 is detected in testis.

The protein resides in the cytoplasm. Its subcellular location is the cell membrane. It localises to the cytoplasmic vesicle membrane. The protein localises to the synapse. It is found in the cytoplasmic vesicle. The protein resides in the secretory vesicle. Its subcellular location is the synaptic vesicle. Inhibits translocation of GLUT4 from intracellular vesicles to the plasma membrane. Plays a regulatory role in calcium-dependent exocytosis and neurotransmitter release. Inhibits membrane fusion between transport vesicles and the plasma membrane. May modulate the assembly of trans-SNARE complexes between transport vesicles and the plasma membrane. Competes with STXBP1 for STX1 binding. The chain is Syntaxin-binding protein 5 (Stxbp5) from Rattus norvegicus (Rat).